The chain runs to 203 residues: uncharacterized protein (203 aa).

The protein belongs to the mimivirus L332/L333/L334 family.

This is an uncharacterized protein from Acanthamoeba polyphaga mimivirus (APMV).